The chain runs to 220 residues: Ribosomal RNA large subunit methyltransferase E (220 aa).

S-adenosyl-L-methionine contacts are provided by Gly60, Trp62, Asp92, Asp108, and Asp133. The active-site Proton acceptor is Lys173. The segment at 198 to 220 (KPKASRDKSSETFILGRQLKHPR) is disordered.

The protein belongs to the class I-like SAM-binding methyltransferase superfamily. RNA methyltransferase RlmE family.

Its subcellular location is the cytoplasm. The catalysed reaction is uridine(2552) in 23S rRNA + S-adenosyl-L-methionine = 2'-O-methyluridine(2552) in 23S rRNA + S-adenosyl-L-homocysteine + H(+). Specifically methylates the uridine in position 2552 of 23S rRNA at the 2'-O position of the ribose in the fully assembled 50S ribosomal subunit. The sequence is that of Ribosomal RNA large subunit methyltransferase E from Burkholderia cenocepacia (strain HI2424).